The chain runs to 340 residues: Nuclear hormone receptor family member nhr-197 (340 aa).

The segment at residues 1 to 75 (MNCVVCSGRA…VGMTLAPLND (75 aa)) is a DNA-binding region (nuclear receptor). 2 NR C4-type zinc fingers span residues 3-23 (CVVC…CFAC) and 39-58 (CKRI…CRAC). The NR LBD domain maps to 98–337 (KNDKNYSHFV…KRIMQDLFSN (240 aa)).

This sequence belongs to the nuclear hormone receptor family.

It is found in the nucleus. Its function is as follows. Orphan nuclear receptor. In Caenorhabditis elegans, this protein is Nuclear hormone receptor family member nhr-197 (nhr-197).